Here is a 192-residue protein sequence, read N- to C-terminus: Lipid A acyltransferase PagP (192 aa).

Residues 1–26 (MTVVNKSFLTFLVFFCQILFPLNASA) form the signal peptide. Catalysis depends on residues H64, D107, and S108.

The protein belongs to the lipid A palmitoyltransferase family. In terms of assembly, homodimer.

The protein resides in the cell outer membrane. It carries out the reaction a lipid A + a 1,2-diacyl-sn-glycero-3-phosphocholine = a hepta-acyl lipid A + a 2-acyl-sn-glycero-3-phosphocholine. The catalysed reaction is a lipid IVA + a 1,2-diacyl-sn-glycero-3-phosphocholine = a lipid IVB + a 2-acyl-sn-glycero-3-phosphocholine. The enzyme catalyses a lipid IIA + a 1,2-diacyl-sn-glycero-3-phosphocholine = a lipid IIB + a 2-acyl-sn-glycero-3-phosphocholine. Transfers a fatty acid residue from the sn-1 position of a phospholipid to the N-linked hydroxyfatty acid chain on the proximal unit of lipid A or its precursors. This Cronobacter turicensis (strain DSM 18703 / CCUG 55852 / LMG 23827 / z3032) protein is Lipid A acyltransferase PagP.